Here is a 377-residue protein sequence, read N- to C-terminus: Carbamoyl phosphate synthase small chain (377 aa).

The segment at 1-186 (MSTPALLVLA…LGKGFVTPDE (186 aa)) is CPSase. 3 residues coordinate L-glutamine: S47, G238, and G240. The Glutamine amidotransferase type-1 domain occupies 190 to 377 (HVVAYDFGVK…IGNMKAAKRA (188 aa)). Residue C266 is the Nucleophile of the active site. The L-glutamine site is built by L267, Q270, N308, G310, and F311. Catalysis depends on residues H350 and E352.

It belongs to the CarA family. As to quaternary structure, composed of two chains; the small (or glutamine) chain promotes the hydrolysis of glutamine to ammonia, which is used by the large (or ammonia) chain to synthesize carbamoyl phosphate. Tetramer of heterodimers (alpha,beta)4.

The catalysed reaction is hydrogencarbonate + L-glutamine + 2 ATP + H2O = carbamoyl phosphate + L-glutamate + 2 ADP + phosphate + 2 H(+). It catalyses the reaction L-glutamine + H2O = L-glutamate + NH4(+). It functions in the pathway amino-acid biosynthesis; L-arginine biosynthesis; carbamoyl phosphate from bicarbonate: step 1/1. It participates in pyrimidine metabolism; UMP biosynthesis via de novo pathway; (S)-dihydroorotate from bicarbonate: step 1/3. Its function is as follows. Small subunit of the glutamine-dependent carbamoyl phosphate synthetase (CPSase). CPSase catalyzes the formation of carbamoyl phosphate from the ammonia moiety of glutamine, carbonate, and phosphate donated by ATP, constituting the first step of 2 biosynthetic pathways, one leading to arginine and/or urea and the other to pyrimidine nucleotides. The small subunit (glutamine amidotransferase) binds and cleaves glutamine to supply the large subunit with the substrate ammonia. This chain is Carbamoyl phosphate synthase small chain, found in Neisseria meningitidis serogroup A / serotype 4A (strain DSM 15465 / Z2491).